The following is a 297-amino-acid chain: ClpXP adapter protein SpxH (297 aa).

The protein belongs to the SpxH family. In terms of assembly, interacts with Spx.

The protein resides in the cytoplasm. Adapter protein required for efficient degradation of Spx by ClpXP under non-stress conditions. Interaction with Spx stabilizes Spx and exposes the C-terminus of Spx for recognition and proteolysis by ClpXP. The protein is ClpXP adapter protein SpxH of Bacillus cereus (strain ATCC 14579 / DSM 31 / CCUG 7414 / JCM 2152 / NBRC 15305 / NCIMB 9373 / NCTC 2599 / NRRL B-3711).